We begin with the raw amino-acid sequence, 729 residues long: Catalase-peroxidase 1 (729 aa).

The segment at residues 98–226 is a cross-link (tryptophyl-tyrosyl-methioninium (Trp-Tyr) (with M-252)); that stretch reads WHSAGSYRIA…LAAVMMGLIY (129 aa). Catalysis depends on His-99, which acts as the Proton acceptor. Residues 226 to 252 constitute a cross-link (tryptophyl-tyrosyl-methioninium (Tyr-Met) (with W-98)); it reads YVNPEGVDGNPDPLRTAKDIRETFARM. His-267 serves as a coordination point for heme b.

This sequence belongs to the peroxidase family. Peroxidase/catalase subfamily. As to quaternary structure, homodimer or homotetramer. Requires heme b as cofactor. Post-translationally, formation of the three residue Trp-Tyr-Met cross-link is important for the catalase, but not the peroxidase activity of the enzyme.

It carries out the reaction H2O2 + AH2 = A + 2 H2O. The enzyme catalyses 2 H2O2 = O2 + 2 H2O. Functionally, bifunctional enzyme with both catalase and broad-spectrum peroxidase activity. This chain is Catalase-peroxidase 1, found in Cellvibrio japonicus (strain Ueda107) (Pseudomonas fluorescens subsp. cellulosa).